The primary structure comprises 1031 residues: Protein translocase subunit SecA (1031 aa).

ATP-binding positions include Gln143, 161–165 (GEGKT), and Asp661. Basic and acidic residues predominate over residues 963-973 (KERLVAKHEES). Residues 963 to 1031 (KERLVAKHEE…GKKYKNCCGR (69 aa)) are disordered. Residues Cys1017, Cys1019, Cys1028, and Cys1029 each coordinate Zn(2+).

Belongs to the SecA family. In terms of assembly, monomer and homodimer. Part of the essential Sec protein translocation apparatus which comprises SecA, SecYEG and auxiliary proteins SecDF. Other proteins may also be involved. Requires Zn(2+) as cofactor.

Its subcellular location is the cell inner membrane. It localises to the cytoplasm. The enzyme catalyses ATP + H2O + cellular proteinSide 1 = ADP + phosphate + cellular proteinSide 2.. In terms of biological role, part of the Sec protein translocase complex. Interacts with the SecYEG preprotein conducting channel. Has a central role in coupling the hydrolysis of ATP to the transfer of proteins into and across the cell membrane, serving as an ATP-driven molecular motor driving the stepwise translocation of polypeptide chains across the membrane. In Prosthecochloris aestuarii (strain DSM 271 / SK 413), this protein is Protein translocase subunit SecA.